Consider the following 330-residue polypeptide: tRNA-modifying protein YgfZ (330 aa).

Folate is bound by residues Trp28 and Trp190.

It belongs to the tRNA-modifying YgfZ family.

The protein localises to the cytoplasm. Its function is as follows. Folate-binding protein involved in regulating the level of ATP-DnaA and in the modification of some tRNAs. It is probably a key factor in regulatory networks that act via tRNA modification, such as initiation of chromosomal replication. This chain is tRNA-modifying protein YgfZ, found in Yersinia pestis bv. Antiqua (strain Antiqua).